The following is a 643-amino-acid chain: MDSTDKKVQVASRLPVPPKRKYVSNDENQEQMQRKRLRSSLESELPAVRVAASIATSKPRAAPVAALPKPQVIGRQSLAVMRPKNSGPGITSTSFSGKTKVSSSVTQPAAIGAEKKKRAAWDLKGQVNDMRDTVSNYKGKMQNLTGENARLLNSKEKLQREVEVLASENSKLSQERCTLESQLREVRQQVSTFEREVARLTELCQRQEKELSSHTNTIEELQGANAILTKQLLDKEVKLDCVSGENTSLKHTVNEQTDEIAALKVCLAEKDTEVHSLDTERRRLHNLVQELKGNIRVFCRVRPTLTPERELPAGHISFPSNDGKAIVLSKMEESHIGREKKDAVKYDFNFDCVFPPPCSQESVFEEISLLVQSALDGYPVCIFAYGQTGSGKTYTMEGPEDVTDDSMGMIPRAIHQIFSSAEELKAKGWQYTFTASFLEIYNETIRDLLINRPDKKLEYEIRKVNSANMLLYVTNLRYVKVSCVEEVHELLKIAKANRSVAKTAINDRSSRSHSVFQLKIEGENKQRDLKTSSMISLIDLAGSERLDRSLSTGDRLKETQCINTSLSTLGMVITSLCNKDSHIPYRNSKLTYLLQNSLGGNAKVLMFVNISPLEENFAESLNSLRFASKVNECVIGTARANRK.

2 disordered regions span residues 1–42 (MDST…SSLE) and 81–101 (MRPK…KTKV). Residues 1-116 (MDSTDKKVQV…QPAAIGAEKK (116 aa)) are globular. Residues 88-101 (PGITSTSFSGKTKV) are compositionally biased toward polar residues. Residues 117 to 296 (KRAAWDLKGQ…LVQELKGNIR (180 aa)) are a coiled coil. One can recognise a Kinesin motor domain in the interval 294–633 (NIRVFCRVRP…LRFASKVNEC (340 aa)). 386-393 (GQTGSGKT) contributes to the ATP binding site.

This sequence belongs to the TRAFAC class myosin-kinesin ATPase superfamily. Kinesin family. NCD subfamily.

It is found in the cytoplasm. Its subcellular location is the cytoskeleton. Functionally, promotes mitotic spindle assembly. The polypeptide is Carboxy-terminal kinesin 2 (Xenopus laevis (African clawed frog)).